The chain runs to 497 residues: Argininosuccinate lyase (497 aa).

The protein belongs to the lyase 1 family. Argininosuccinate lyase subfamily.

The protein localises to the cytoplasm. It carries out the reaction 2-(N(omega)-L-arginino)succinate = fumarate + L-arginine. It participates in amino-acid biosynthesis; L-arginine biosynthesis; L-arginine from L-ornithine and carbamoyl phosphate: step 3/3. The sequence is that of Argininosuccinate lyase from Clavibacter michiganensis subsp. michiganensis (strain NCPPB 382).